The following is a 101-amino-acid chain: MYIENFLLLASALFCIGIYGLLTSRNIVRVLMCLELCLNAININFIAFSNFIDYEKINGQVIAIFIMTIAAAEAAIGLALVLTIYRNRETVDIENFDLLKG.

Helical transmembrane passes span 2 to 22 (YIEN…YGLL), 32 to 52 (MCLE…SNFI), and 61 to 81 (VIAI…LALV).

The protein belongs to the complex I subunit 4L family. NDH is composed of at least 16 different subunits, 5 of which are encoded in the nucleus.

It localises to the plastid. The protein localises to the chloroplast thylakoid membrane. The catalysed reaction is a plastoquinone + NADH + (n+1) H(+)(in) = a plastoquinol + NAD(+) + n H(+)(out). The enzyme catalyses a plastoquinone + NADPH + (n+1) H(+)(in) = a plastoquinol + NADP(+) + n H(+)(out). NDH shuttles electrons from NAD(P)H:plastoquinone, via FMN and iron-sulfur (Fe-S) centers, to quinones in the photosynthetic chain and possibly in a chloroplast respiratory chain. The immediate electron acceptor for the enzyme in this species is believed to be plastoquinone. Couples the redox reaction to proton translocation, and thus conserves the redox energy in a proton gradient. In Mesostigma viride (Green alga), this protein is NAD(P)H-quinone oxidoreductase subunit 4L, chloroplastic.